A 73-amino-acid polypeptide reads, in one-letter code: Cytochrome b559 subunit alpha (73 aa).

The chain crosses the membrane as a helical span at residues 21 to 35 (IIHSITVPSLFIAGW). A heme-binding site is contributed by His-23.

This sequence belongs to the PsbE/PsbF family. Heterodimer of an alpha subunit and a beta subunit. PSII is composed of 1 copy each of membrane proteins PsbA, PsbB, PsbC, PsbD, PsbE, PsbF, PsbH, PsbI, PsbJ, PsbK, PsbL, PsbM, PsbT, PsbY, PsbZ, Psb30/Ycf12, at least 3 peripheral proteins of the oxygen-evolving complex and a large number of cofactors. It forms dimeric complexes. Requires heme b as cofactor.

Its subcellular location is the plastid. The protein resides in the chloroplast thylakoid membrane. In terms of biological role, this b-type cytochrome is tightly associated with the reaction center of photosystem II (PSII). PSII is a light-driven water:plastoquinone oxidoreductase that uses light energy to abstract electrons from H(2)O, generating O(2) and a proton gradient subsequently used for ATP formation. It consists of a core antenna complex that captures photons, and an electron transfer chain that converts photonic excitation into a charge separation. The chain is Cytochrome b559 subunit alpha from Bigelowiella natans (Pedinomonas minutissima).